We begin with the raw amino-acid sequence, 176 residues long: Protein MAL2 (176 aa).

At 1 to 34 (MSAGGASVPPPPNPAVSFPVPRVTLPAGPDILRT) the chain is on the cytoplasmic side. Residues 31 to 175 (ILRTYSGAFV…SLGLALRRWR (145 aa)) enclose the MARVEL domain. Residues 35-55 (YSGAFVCLEILFGGLVWILVA) traverse the membrane as a helical segment. Topologically, residues 56 to 66 (SSNVPLPLLQG) are lumenal. A helical transmembrane segment spans residues 67–87 (WVMFVSVTAFFFSLLFLGLFL). Residues 88 to 102 (SGMVTQIDANWNFLD) are Cytoplasmic-facing. The chain crosses the membrane as a helical span at residues 103–123 (FAYHFTVFVFYFGAFLLEAAA). The Lumenal segment spans residues 124 to 149 (TSLHDLHYNITMTGQPLLNDNQYNIN). Residue asparagine 132 is glycosylated (N-linked (GlcNAc...) asparagine). Residues 150–170 (VAASIFAFMTTACYGCSLGLA) form a helical membrane-spanning segment. The Cytoplasmic segment spans residues 171 to 176 (LRRWRP).

The protein belongs to the MAL family. As to quaternary structure, interacts with TPD52L2.

The protein resides in the cell membrane. It localises to the apical cell membrane. In terms of biological role, member of the machinery of polarized transport. Required for the indirect transcytotic route at the step of the egress of the transcytosing cargo from perinuclear endosomes in order for it to travel to the apical surface via a raft-dependent pathway. The sequence is that of Protein MAL2 (MAL2) from Pongo abelii (Sumatran orangutan).